Reading from the N-terminus, the 316-residue chain is Ornithine carbamoyltransferase (316 aa).

Residues 59–62, Gln-86, Arg-110, and 137–140 contribute to the carbamoyl phosphate site; these read STRT and HPCQ. Residues Asn-168, Asp-232, and 236 to 237 each bind L-ornithine; that span reads SM. Carbamoyl phosphate-binding positions include 273 to 274 and Arg-301; that span reads CL.

It belongs to the aspartate/ornithine carbamoyltransferase superfamily. OTCase family.

Its subcellular location is the cytoplasm. The enzyme catalyses carbamoyl phosphate + L-ornithine = L-citrulline + phosphate + H(+). It functions in the pathway amino-acid biosynthesis; L-arginine biosynthesis; L-arginine from L-ornithine and carbamoyl phosphate: step 1/3. Its function is as follows. Reversibly catalyzes the transfer of the carbamoyl group from carbamoyl phosphate (CP) to the N(epsilon) atom of ornithine (ORN) to produce L-citrulline. The sequence is that of Ornithine carbamoyltransferase from Listeria monocytogenes serotype 4b (strain F2365).